We begin with the raw amino-acid sequence, 365 residues long: Putative fatty acid elongase 2 (365 aa).

The Lumenal portion of the chain corresponds to 1–68 (MPDSPTLHHN…SFEFIVNKTR (68 aa)). Residues Asn-17 and Asn-65 are each glycosylated (N-linked (GlcNAc...) asparagine). The chain crosses the membrane as a helical span at residues 69-89 (FSSAPVVATIIISYYLLILVG). At 90 to 111 (GRIMRNRQPIRLQKIFQYYNLT) the chain is on the cytoplasmic side. Residues 112–132 (FSIASAILALLIFEQVAPAIY) form a helical membrane-spanning segment. Residues 133-149 (KHGFFFSICNEKAWTQP) lie on the Lumenal side of the membrane. The helical transmembrane segment at 150–170 (LVFLYYCAYISKFLELTDTFF) threads the bilayer. Residues 171–179 (LVLRKKPLQ) are Cytoplasmic-facing. The chain crosses the membrane as a helical span at residues 180-198 (FLHCYHHGATAVLVYTQIV). Residues 199–204 (GRTSIS) are Lumenal-facing. Residues 205 to 225 (WLIIEINLLVHVTMYYYYYLV) traverse the membrane as a helical segment. Over 226–241 (AKGIRVPWKKWVTRFQ) the chain is Cytoplasmic. The helical transmembrane segment at 242–262 (IVQFFADLGFIYFAVYTEVAY) threads the bilayer. The Lumenal segment spans residues 263–278 (RLKFYKACMGHCSGHP). The helical transmembrane segment at 279-299 (LAAFCGLATISSYLVLFIVFY) threads the bilayer. Residues 300–365 (HNTYKKNAAL…PISSGLNNEK (66 aa)) are Cytoplasmic-facing.

The protein belongs to the ELO family.

It is found in the endoplasmic reticulum membrane. The enzyme catalyses a very-long-chain acyl-CoA + malonyl-CoA + H(+) = a very-long-chain 3-oxoacyl-CoA + CO2 + CoA. Functionally, may be involved in the synthesis of very long chain fatty acids. This is Putative fatty acid elongase 2 from Schizosaccharomyces pombe (strain 972 / ATCC 24843) (Fission yeast).